Reading from the N-terminus, the 428-residue chain is MSTLAILGAGAKAVAVAAKASVLRDMGVEVPDVVAVERIGVAANWQASGGWTDGAHRLGTSPEKDVGFPYRSALVPRRNAELDERMTRYSWQSYLIATASFAEWIDRGRPAPTHRRWSQYLSWVADHVGMTVVHGEVEQLAVTGDRWALHTHETTVHADALMITGPGQAEKSLLPGNPRMLSIAQFWDRAANHDRISAERVAVIGGGETAAAMLNELFRHRVSSITVISPQATLFTRGEGYFENSLFSDPTNWPALTLAERRDALARTDRGVFSSSVQEALLADDRIHHLRGRVTHAVGVQGQIRLTLSTNRGSENLETVHGFDLVIDGSGADSLWFAPLFSQEALDLLELGLGGPLSSERLQEAIGYDLAVTDVTPKLFLPNLSGLTQGPGFPNLSCLGLLSDRVLGSTLGPTNYPARRRHDERQPL.

An N-terminal signal peptide occupies residues 1-20 (MSTLAILGAGAKAVAVAAKA).

It belongs to the lysine N(6)-hydroxylase/L-ornithine N(5)-oxygenase family. Requires FAD as cofactor.

It catalyses the reaction L-lysine + NADPH + O2 = N(6)-hydroxy-L-lysine + NADP(+) + H2O. It participates in siderophore biosynthesis; mycobactin biosynthesis. Functionally, flavoprotein monooxygenase required for N-hydroxylation of the two acylated lysine residues during mycobactin assembly, thus producing the hydroxamate groups necessary for iron sequestration. Is also able, but less efficiently, to hydroxylate L-lysine (non acylated) in vitro. This chain is L-lysine N6-monooxygenase MbtG (mbtG), found in Mycolicibacterium paratuberculosis (strain ATCC BAA-968 / K-10) (Mycobacterium paratuberculosis).